A 500-amino-acid polypeptide reads, in one-letter code: Transcription factor-like 5 protein (500 aa).

Pro residues-rich tracts occupy residues 1 to 12 (MSGPGPREPPPE) and 196 to 210 (AEPPPAPRGPEPPEP). Disordered stretches follow at residues 1–34 (MSGPGPREPPPEAGAAGGEAAVEGAGGGDAALGE) and 191–211 (FNSIPAEPPPAPRGPEPPEPG). The R3 epitope (recognized by Chagas's antibodies) stretch occupies residues 347–356 (MRQLDTNVER). The tract at residues 365–410 (VGEGATATQGAWQSSESSQANLGEQAQSGPQGGRSQRRERHNRMER) is disordered. Polar residues predominate over residues 370 to 393 (TATQGAWQSSESSQANLGEQAQSG). Residues 400–450 (QRRERHNRMERDRRRRIRICCDELNLLVPFCNAETDKATTLQWTTAFLKYI) form the bHLH domain. The R1 epitope (recognized by Chagas's antibodies) stretch occupies residues 481 to 500 (SLVTCPAQGSLQSSPSMEIK).

In terms of assembly, efficient DNA binding requires dimerization with another bHLH protein. Isoform 3 is testis specific. Isoform 2 is pancreas specific.

The protein localises to the nucleus. In terms of biological role, putative transcription factor. Isoform 3 may play a role in early spermatogenesis. The polypeptide is Transcription factor-like 5 protein (TCFL5) (Homo sapiens (Human)).